We begin with the raw amino-acid sequence, 578 residues long: GTP diphosphokinase CRSH3, chloroplastic (578 aa).

A chloroplast-targeting transit peptide spans 1-45; it reads MANAGVNETVAVAVAIDAPGVGHDHGAAGEVRRPSTRRLAPAGSG. The HD domain occupies 99–199; that stretch reads SVSRALVVAA…LELAVKLDAM (101 aa). EF-hand domains follow at residues 468-503 and 506-537; these read ATAGNVERAFQLLDKNGDGRISMEELTEIMEDLGAG and DAEELMRLLDANSDGSLSSDEFALFQKRVKLK. Residues D481, N483, D485, R487, E492, D515, N517, D519, S521, and E526 each coordinate Ca(2+).

It belongs to the RelA/SpoT family. Expressed in roots and shoots.

Its subcellular location is the plastid. It is found in the chloroplast. It catalyses the reaction GTP + ATP = guanosine 3'-diphosphate 5'-triphosphate + AMP. Activated by calcium. In terms of biological role, possesses calcium-dependent ppGpp (guanosine 3'-diphosphate 5'-diphosphate) synthetase activity in vitro and is able to functionally complement E.coli relA mutants. May be involved in a rapid plant ppGpp-mediated response to pathogens and other stresses. The chain is GTP diphosphokinase CRSH3, chloroplastic from Oryza sativa subsp. japonica (Rice).